The following is a 360-amino-acid chain: Biotin synthase 2 (360 aa).

In terms of domain architecture, Radical SAM core spans 53–280 (RRVKLNFLVN…TAEVRLSGGR (228 aa)). [4Fe-4S] cluster-binding residues include cysteine 68, cysteine 72, and cysteine 75. [2Fe-2S] cluster is bound by residues cysteine 112, cysteine 145, cysteine 205, and arginine 275.

This sequence belongs to the radical SAM superfamily. Biotin synthase family. Homodimer. The cofactor is [4Fe-4S] cluster. [2Fe-2S] cluster serves as cofactor.

It carries out the reaction (4R,5S)-dethiobiotin + (sulfur carrier)-SH + 2 reduced [2Fe-2S]-[ferredoxin] + 2 S-adenosyl-L-methionine = (sulfur carrier)-H + biotin + 2 5'-deoxyadenosine + 2 L-methionine + 2 oxidized [2Fe-2S]-[ferredoxin]. The protein operates within cofactor biosynthesis; biotin biosynthesis; biotin from 7,8-diaminononanoate: step 2/2. In terms of biological role, catalyzes the conversion of dethiobiotin (DTB) to biotin by the insertion of a sulfur atom into dethiobiotin via a radical-based mechanism. This is Biotin synthase 2 from Frankia casuarinae (strain DSM 45818 / CECT 9043 / HFP020203 / CcI3).